Reading from the N-terminus, the 187-residue chain is Putative protein SSX8 (187 aa).

Disordered stretches follow at residues Met-1 to Arg-21 and Pro-109 to Glu-187. Residues Lys-20–Tyr-83 form the KRAB-related domain. The residue at position 123 (Ser-123) is a Phosphoserine. Residues Lys-152–Arg-168 show a composition bias toward basic residues.

It belongs to the SSX family. In terms of tissue distribution, not detected in any normal or tumor tissues.

In terms of biological role, could act as a modulator of transcription. The polypeptide is Putative protein SSX8 (Homo sapiens (Human)).